Reading from the N-terminus, the 296-residue chain is ATP synthase gamma chain (296 aa).

Belongs to the ATPase gamma chain family. In terms of assembly, F-type ATPases have 2 components, CF(1) - the catalytic core - and CF(0) - the membrane proton channel. CF(1) has five subunits: alpha(3), beta(3), gamma(1), delta(1), epsilon(1). CF(0) has three main subunits: a, b and c.

It localises to the cell inner membrane. Produces ATP from ADP in the presence of a proton gradient across the membrane. The gamma chain is believed to be important in regulating ATPase activity and the flow of protons through the CF(0) complex. This is ATP synthase gamma chain from Methylorubrum extorquens (strain PA1) (Methylobacterium extorquens).